A 527-amino-acid chain; its full sequence is Heat shock factor protein HSF8 (527 aa).

A DNA-binding region spans residues 39–133 (PFLVKTYDMV…KSISRRKPAH (95 aa)). 3 disordered regions span residues 128–158 (RRKP…HSAS), 241–273 (NESN…ADGQ), and 297–341 (SSPR…TSGK). Residues 134–152 (GHAQQQQQPHGNAQQQMQP) are compositionally biased toward low complexity. A compositionally biased stretch (polar residues) spans 317–326 (SPQSNASSGR).

Belongs to the HSF family. Homotrimer. In terms of processing, exhibits temperature-dependent phosphorylation.

The protein resides in the nucleus. Its function is as follows. DNA-binding protein that specifically binds heat shock promoter elements (HSE) and activates transcription. The sequence is that of Heat shock factor protein HSF8 (HSF8) from Solanum lycopersicum (Tomato).